Consider the following 683-residue polypeptide: U4/U6 small nuclear ribonucleoprotein Prp3 (683 aa).

The region spanning 1-87 (MALSKRELDE…HSKSSSDRSR (87 aa)) is the PWI domain. Residues 73-107 (GRSSRHSKSSSDRSRKRDLKEVFGDDSEISKESSG) are compositionally biased toward basic and acidic residues. The disordered stretch occupies residues 73–135 (GRSSRHSKSS…IPGPPSESPG (63 aa)). Lys139 is covalently cross-linked (Glycyl lysine isopeptide (Lys-Gly) (interchain with G-Cter in SUMO2)). Residues 153-183 (IEERKKQLSFISPPTPQPKTPSSSQPERLPI) are disordered. Phosphoserine is present on Ser164. Thr167 is subject to Phosphothreonine. Residues Lys244 and Lys252 each participate in a glycyl lysine isopeptide (Lys-Gly) (interchain with G-Cter in SUMO2) cross-link. The interval 416–550 (NLVEHPAQLN…VHISVYRVRN (135 aa)) is mediates interaction with SART3. Ser619 bears the Phosphoserine mark.

In terms of assembly, component of the precatalytic spliceosome (spliceosome B complex). Component of the U4/U6-U5 tri-snRNP complex, a building block of the precatalytic spliceosome (spliceosome B complex). The U4/U6-U5 tri-snRNP complex is composed of the U4, U6 and U5 snRNAs and at least PRPF3, PRPF4, PRPF6, PRPF8, PRPF31, SNRNP200, TXNL4A, SNRNP40, SNRPB, SNRPD1, SNRPD2, SNRPD3, SNRPE, SNRPF, SNRPG, DDX23, CD2BP2, PPIH, SNU13, EFTUD2, SART1 and USP39, plus LSM2, LSM3, LSM4, LSM5, LSM6, LSM7 and LSM8. Interacts directly with PRPF4. Part of a heteromeric complex containing PPIH, PRPF3 and PRPF4 that is stable in the absence of RNA. Interacts with SART3; the interaction is direct and recruits the deubiquitinase USP4 to PRPF3. Interacts with PRPF19. Interacts ('Lys-63'-linked polyubiquitinated) with PRPF8 (via the MPN (JAB/Mov34) domain); may stabilize the U4/U6-U5 tri-snRNP complex. Interacts with ERCC6. In terms of processing, ubiquitinated. Undergoes 'Lys-63'-linked polyubiquitination by PRPF19 and deubiquitination by USP4. 'Lys-63'-linked ubiquitination increases the affinity for PRPF8 and may regulate the assembly of the U4/U6-U5 tri-snRNP complex.

The protein localises to the nucleus. It localises to the nucleus speckle. Its function is as follows. Plays a role in pre-mRNA splicing as component of the U4/U6-U5 tri-snRNP complex that is involved in spliceosome assembly, and as component of the precatalytic spliceosome (spliceosome B complex). The chain is U4/U6 small nuclear ribonucleoprotein Prp3 (PRPF3) from Bos taurus (Bovine).